The primary structure comprises 879 residues: mRNA-binding protein PUF3 (879 aa).

Thr83 carries the post-translational modification Phosphothreonine. Phosphoserine occurs at positions 207 and 210. Disordered regions lie at residues 222–256, 344–417, and 443–512; these read ESDK…LESE, PANE…QQQQ, and KKRN…QQTY. Residues 237–255 are compositionally biased toward low complexity; that stretch reads SGSLYHSSSNSGSSASLES. Residues 370-395 are compositionally biased toward pro residues; it reads SSPPNNSPFPFAYPNPMMFMPPPPLS. Low complexity-rich tracts occupy residues 398-417, 449-463, 472-491, and 501-512; these read QQQQ…QQQQ, NHPA…KQAN, TKNT…TANN, and HSQSLQQQQQTY. Positions 513–871 constitute a PUM-HD domain; it reads HRSPLLEQLR…RHLASVEKLA (359 aa). Pumilio repeat units lie at residues 538–573, 574–609, 610–645, 646–681, 682–717, 718–759, 760–795, and 807–844; these read DIFG…VIFN, EIRD…TLVD, QFKG…ELVL, ELSD…FILS, SLTG…SILN, ELKD…EIIE, TVAN…LIIS, and NLED…LIVI.

The protein belongs to the PUF3 family.

The protein resides in the mitochondrion outer membrane. It is found in the cytoplasm. Functionally, RNA-binding protein involved in post-transcriptional regulation. Negatively regulates expression of COX17 by binding to the 3'-UTR of COX17 mRNA. Promotes decay of COX17 mRNA by enhancing its rate of deadenylation and subsequent turnover. Predominantly binds to mRNAs encoding mitochondrial proteins and localizes them to the vicinity of mitochondria for translation. Regulates mitochondrial biogenesis, motility and morphology. The polypeptide is mRNA-binding protein PUF3 (PUF3) (Saccharomyces cerevisiae (strain ATCC 204508 / S288c) (Baker's yeast)).